Reading from the N-terminus, the 295-residue chain is Pyridoxal 5'-phosphate synthase subunit PdxS (295 aa).

Aspartate 25 contributes to the D-ribose 5-phosphate binding site. Residue lysine 82 is the Schiff-base intermediate with D-ribose 5-phosphate of the active site. A D-ribose 5-phosphate-binding site is contributed by glycine 154. Arginine 166 is a D-glyceraldehyde 3-phosphate binding site. Residues glycine 215 and 236–237 (GS) each bind D-ribose 5-phosphate.

Belongs to the PdxS/SNZ family. In terms of assembly, in the presence of PdxT, forms a dodecamer of heterodimers.

The enzyme catalyses aldehydo-D-ribose 5-phosphate + D-glyceraldehyde 3-phosphate + L-glutamine = pyridoxal 5'-phosphate + L-glutamate + phosphate + 3 H2O + H(+). The protein operates within cofactor biosynthesis; pyridoxal 5'-phosphate biosynthesis. Functionally, catalyzes the formation of pyridoxal 5'-phosphate from ribose 5-phosphate (RBP), glyceraldehyde 3-phosphate (G3P) and ammonia. The ammonia is provided by the PdxT subunit. Can also use ribulose 5-phosphate and dihydroxyacetone phosphate as substrates, resulting from enzyme-catalyzed isomerization of RBP and G3P, respectively. This is Pyridoxal 5'-phosphate synthase subunit PdxS from Staphylococcus haemolyticus (strain JCSC1435).